The sequence spans 368 residues: UDP-N-acetylglucosamine--N-acetylmuramyl-(pentapeptide) pyrophosphoryl-undecaprenol N-acetylglucosamine transferase (368 aa).

Residues 10–12, asparagine 128, arginine 170, serine 199, isoleucine 250, and glutamine 295 each bind UDP-N-acetyl-alpha-D-glucosamine; that span reads TGG.

It belongs to the glycosyltransferase 28 family. MurG subfamily.

The protein localises to the cell inner membrane. The catalysed reaction is di-trans,octa-cis-undecaprenyl diphospho-N-acetyl-alpha-D-muramoyl-L-alanyl-D-glutamyl-meso-2,6-diaminopimeloyl-D-alanyl-D-alanine + UDP-N-acetyl-alpha-D-glucosamine = di-trans,octa-cis-undecaprenyl diphospho-[N-acetyl-alpha-D-glucosaminyl-(1-&gt;4)]-N-acetyl-alpha-D-muramoyl-L-alanyl-D-glutamyl-meso-2,6-diaminopimeloyl-D-alanyl-D-alanine + UDP + H(+). It participates in cell wall biogenesis; peptidoglycan biosynthesis. Functionally, cell wall formation. Catalyzes the transfer of a GlcNAc subunit on undecaprenyl-pyrophosphoryl-MurNAc-pentapeptide (lipid intermediate I) to form undecaprenyl-pyrophosphoryl-MurNAc-(pentapeptide)GlcNAc (lipid intermediate II). The chain is UDP-N-acetylglucosamine--N-acetylmuramyl-(pentapeptide) pyrophosphoryl-undecaprenol N-acetylglucosamine transferase from Chlorobium phaeovibrioides (strain DSM 265 / 1930) (Prosthecochloris vibrioformis (strain DSM 265)).